The sequence spans 393 residues: FAD-dependent monooxygenase dbaB (393 aa).

Positions 1 to 23 (MTRTSPTLPVIILGAGMVGLTLA) are cleaved as a signal peptide. FAD-binding residues include glutamate 37 and arginine 107. Asparagine 128 carries an N-linked (GlcNAc...) asparagine glycan. Residue tyrosine 221 is part of the active site. Asparagine 233 carries an N-linked (GlcNAc...) asparagine glycan. Residue aspartate 320 participates in FAD binding.

Belongs to the paxM FAD-dependent monooxygenase family. Requires FAD as cofactor.

It participates in secondary metabolite biosynthesis. Its function is as follows. FAD-dependent monooxygenase; part of the gene cluster that mediates the biosynthesis of the antibiotic 2,4-dihydroxy-3-methyl-6-(2-oxopropyl)benzaldehyde (DHMBA) and its derivatives. The direct non-reducing polyketide synthase dbaI product is 2,4-dihydroxy-3-methyl-6-(2-oxopropyl)benzaldehyde (DHMBA), produced by condensation of one acetyl-CoA starter unit with 4 malonyl-CoA units and one methylation step. The FAD-dependent monooxygenase dbaH is responsible for the synthesis of yellow pigments derived from the oxidation of DHMBA. The roles of dbaB, C, E and F have still to be determined. This is FAD-dependent monooxygenase dbaB from Emericella nidulans (strain FGSC A4 / ATCC 38163 / CBS 112.46 / NRRL 194 / M139) (Aspergillus nidulans).